A 184-amino-acid polypeptide reads, in one-letter code: GMP synthase [glutamine-hydrolyzing] subunit A (184 aa).

The 182-residue stretch at 3–184 (PICVVNNYGQ…YENFDAICTE (182 aa)) folds into the Glutamine amidotransferase type-1 domain. The Nucleophile role is filled by Cys75. Catalysis depends on residues His162 and Glu164.

As to quaternary structure, heterodimer composed of a glutamine amidotransferase subunit (A) and a GMP-binding subunit (B).

It catalyses the reaction XMP + L-glutamine + ATP + H2O = GMP + L-glutamate + AMP + diphosphate + 2 H(+). The protein operates within purine metabolism; GMP biosynthesis; GMP from XMP (L-Gln route): step 1/1. Its function is as follows. Catalyzes the synthesis of GMP from XMP. The sequence is that of GMP synthase [glutamine-hydrolyzing] subunit A from Methanoregula boonei (strain DSM 21154 / JCM 14090 / 6A8).